A 352-amino-acid polypeptide reads, in one-letter code: Ion-translocating oxidoreductase complex subunit D (352 aa).

The next 5 membrane-spanning stretches (helical) occupy residues 20 to 40 (IMLLVLLAAVPGIAAQLWFFG), 42 to 62 (GTLVQILLASVSALLAEALVL), 78 to 109 (ALLTGLLLAVSIPPLAPWWMVVLGTVFAVIIA), 123 to 143 (PAMIGYVVLLISFPVQMTSWL), and 148 to 168 (IAVNIPGFIDAIQVIFSGHTA). T187 carries the post-translational modification FMN phosphoryl threonine. 5 consecutive transmembrane segments (helical) span residues 214 to 234 (ILAGAGWQWVNLAWLAGGVWL), 242 to 262 (WHIPLSFLVTLTLCATLGWLF), 267 to 287 (LAAPQIHLLSGATMLGAFFIL), 301 to 321 (LIFGALAGLLVWLIRSFGGYP), and 322 to 342 (DGVAFAVLLANITVPLIDYYT).

It belongs to the NqrB/RnfD family. The complex is composed of six subunits: RsxA, RsxB, RsxC, RsxD, RsxE and RsxG. FMN is required as a cofactor.

The protein resides in the cell inner membrane. Part of a membrane-bound complex that couples electron transfer with translocation of ions across the membrane. Required to maintain the reduced state of SoxR. The chain is Ion-translocating oxidoreductase complex subunit D from Escherichia coli O139:H28 (strain E24377A / ETEC).